Consider the following 1509-residue polypeptide: DNA-directed RNA polymerase subunit beta' (1509 aa).

4 residues coordinate Zn(2+): C75, C77, C90, and C93. Residues D474, D476, and D478 each coordinate Mg(2+). Zn(2+) is bound by residues C804, C878, C885, and C888.

Belongs to the RNA polymerase beta' chain family. As to quaternary structure, the RNAP catalytic core consists of 2 alpha, 1 beta, 1 beta' and 1 omega subunit. When a sigma factor is associated with the core the holoenzyme is formed, which can initiate transcription. It depends on Mg(2+) as a cofactor. Requires Zn(2+) as cofactor.

It catalyses the reaction RNA(n) + a ribonucleoside 5'-triphosphate = RNA(n+1) + diphosphate. Functionally, DNA-dependent RNA polymerase catalyzes the transcription of DNA into RNA using the four ribonucleoside triphosphates as substrates. The chain is DNA-directed RNA polymerase subunit beta' from Sulfurovum sp. (strain NBC37-1).